A 639-amino-acid polypeptide reads, in one-letter code: Probable potassium transport system protein Kup 1 (639 aa).

Residues 1-16 (MALANTGSEAEPVEQS) are compositionally biased toward polar residues. The tract at residues 1–21 (MALANTGSEAEPVEQSSHPEI) is disordered. The next 12 membrane-spanning stretches (helical) occupy residues 29 to 49 (LMLG…IYAF), 67 to 87 (ILGV…IKYI), 117 to 137 (AVIL…AVIT), 154 to 174 (PTFQ…VFAV), 182 to 202 (VGLV…LSGL), 220 to 240 (IVAF…AIFL), 260 to 280 (IVLA…AGQG), 302 to 322 (ALIP…QAVI), 354 to 374 (IYMP…VVGF), 383 to 403 (AYGI…YVVM), 411 to 431 (LWVA…FFAS), and 436 to 456 (VFEG…GMWT).

This sequence belongs to the HAK/KUP transporter (TC 2.A.72) family.

Its subcellular location is the cell inner membrane. It catalyses the reaction K(+)(in) + H(+)(in) = K(+)(out) + H(+)(out). Functionally, transport of potassium into the cell. Likely operates as a K(+):H(+) symporter. This chain is Probable potassium transport system protein Kup 1, found in Mesorhizobium japonicum (strain LMG 29417 / CECT 9101 / MAFF 303099) (Mesorhizobium loti (strain MAFF 303099)).